We begin with the raw amino-acid sequence, 156 residues long: SsrA-binding protein (156 aa).

The protein belongs to the SmpB family.

The protein resides in the cytoplasm. Its function is as follows. Required for rescue of stalled ribosomes mediated by trans-translation. Binds to transfer-messenger RNA (tmRNA), required for stable association of tmRNA with ribosomes. tmRNA and SmpB together mimic tRNA shape, replacing the anticodon stem-loop with SmpB. tmRNA is encoded by the ssrA gene; the 2 termini fold to resemble tRNA(Ala) and it encodes a 'tag peptide', a short internal open reading frame. During trans-translation Ala-aminoacylated tmRNA acts like a tRNA, entering the A-site of stalled ribosomes, displacing the stalled mRNA. The ribosome then switches to translate the ORF on the tmRNA; the nascent peptide is terminated with the 'tag peptide' encoded by the tmRNA and targeted for degradation. The ribosome is freed to recommence translation, which seems to be the essential function of trans-translation. The polypeptide is SsrA-binding protein (Staphylococcus epidermidis (strain ATCC 35984 / DSM 28319 / BCRC 17069 / CCUG 31568 / BM 3577 / RP62A)).